The following is a 329-amino-acid chain: Biotin synthase (329 aa).

In terms of domain architecture, Radical SAM core spans Phe48–Arg278. [4Fe-4S] cluster contacts are provided by Cys66, Cys70, and Cys73. Positions 143 and 203 each coordinate [2Fe-2S] cluster.

It belongs to the radical SAM superfamily. Biotin synthase family. As to quaternary structure, homodimer. Requires [4Fe-4S] cluster as cofactor. [2Fe-2S] cluster is required as a cofactor.

The catalysed reaction is (4R,5S)-dethiobiotin + (sulfur carrier)-SH + 2 reduced [2Fe-2S]-[ferredoxin] + 2 S-adenosyl-L-methionine = (sulfur carrier)-H + biotin + 2 5'-deoxyadenosine + 2 L-methionine + 2 oxidized [2Fe-2S]-[ferredoxin]. The protein operates within cofactor biosynthesis; biotin biosynthesis; biotin from 7,8-diaminononanoate: step 2/2. Catalyzes the conversion of dethiobiotin (DTB) to biotin by the insertion of a sulfur atom into dethiobiotin via a radical-based mechanism. This Geobacter sulfurreducens (strain ATCC 51573 / DSM 12127 / PCA) protein is Biotin synthase.